Reading from the N-terminus, the 289-residue chain is ATP synthase gamma chain (289 aa).

It belongs to the ATPase gamma chain family. As to quaternary structure, F-type ATPases have 2 components, CF(1) - the catalytic core - and CF(0) - the membrane proton channel. CF(1) has five subunits: alpha(3), beta(3), gamma(1), delta(1), epsilon(1). CF(0) has three main subunits: a, b and c.

The protein resides in the cell inner membrane. Produces ATP from ADP in the presence of a proton gradient across the membrane. The gamma chain is believed to be important in regulating ATPase activity and the flow of protons through the CF(0) complex. The sequence is that of ATP synthase gamma chain from Haemophilus influenzae (strain PittEE).